Reading from the N-terminus, the 341-residue chain is HTH-type transcriptional repressor PurR (341 aa).

The HTH lacI-type domain maps to 2 to 56 (ATIKDVAKRANVSTTTVSHVINKTRFVAEETRNAVWAAIKELHYSPSAVARSLKV). The segment at residues 4 to 23 (IKDVAKRANVSTTTVSHVIN) is a DNA-binding region (H-T-H motif). Residues 48–56 (SAVARSLKV) mediate DNA binding. Residues Tyr73, Arg190, Thr192, Phe221, and Asp275 each contribute to the hypoxanthine site.

As to quaternary structure, homodimer.

It functions in the pathway purine metabolism; purine nucleotide biosynthesis [regulation]. Is the main repressor of the genes involved in the de novo synthesis of purine nucleotides, regulating purB, purC, purEK, purF, purHD, purL, purMN and guaBA expression. PurR is allosterically activated to bind its cognate DNA by binding the purine corepressors, hypoxanthine or guanine, thereby effecting transcription repression. This chain is HTH-type transcriptional repressor PurR, found in Salmonella typhimurium (strain LT2 / SGSC1412 / ATCC 700720).